Here is a 495-residue protein sequence, read N- to C-terminus: Heat stress transcription factor A-1a (495 aa).

The DNA-binding element occupies 50-144; the sequence is PPPFLSKTYD…LLKKISRRKS (95 aa). Positions 140–164 are disordered; it reads SRRKSVQGHGSSSSNPQSQQLSQGQ. Over residues 146-164 the composition is skewed to low complexity; the sequence is QGHGSSSSNPQSQQLSQGQ. The segment at 172-238 is hydrophobic repeat HR-A/B; that stretch reads SCVEVGKFGL…QIMSFLAKAV (67 aa). The tract at residues 255–288 is disordered; the sequence is NMHVTEANKKRRLREDSTAATESNSHSHSLEASD. A Nuclear localization signal motif is present at residues 262–268; the sequence is NKKRRLR. Over residues 272 to 281 the composition is skewed to polar residues; the sequence is TAATESNSHS. An AHA motif is present at residues 433–442; it reads FEFLEEYMPE. The interval 445–477 is disordered; it reads VFGDATTLENNNNNNNNNNNNNNNNNNNNTNGR. Residues 454–473 show a composition bias toward low complexity; sequence NNNNNNNNNNNNNNNNNNNN. The short motif at 482 to 489 is the Nuclear export signal element; sequence LIEELGLL.

This sequence belongs to the HSF family. Class A subfamily. Homotrimer. Interacts with HSP70-1 and HSP70-4. Binds to CRK1. Binds to HSBP. In terms of processing, exhibits temperature-dependent phosphorylation. Phosphorylated by CRK1. In terms of tissue distribution, constitutively expressed.

It localises to the cytoplasm. Its subcellular location is the nucleus. Functionally, transcriptional activator that specifically binds DNA sequence 5'-AGAAnnTTCT-3' known as heat shock promoter elements (HSE). The polypeptide is Heat stress transcription factor A-1a (HSFA1A) (Arabidopsis thaliana (Mouse-ear cress)).